The chain runs to 292 residues: Ribosomal protein L11 methyltransferase (292 aa).

S-adenosyl-L-methionine-binding residues include threonine 144, glycine 165, aspartate 187, and asparagine 229.

This sequence belongs to the methyltransferase superfamily. PrmA family.

It localises to the cytoplasm. The catalysed reaction is L-lysyl-[protein] + 3 S-adenosyl-L-methionine = N(6),N(6),N(6)-trimethyl-L-lysyl-[protein] + 3 S-adenosyl-L-homocysteine + 3 H(+). Functionally, methylates ribosomal protein L11. This chain is Ribosomal protein L11 methyltransferase, found in Ectopseudomonas mendocina (strain ymp) (Pseudomonas mendocina).